We begin with the raw amino-acid sequence, 372 residues long: 2,7-anhydro-N-acetylneuraminate hydratase (372 aa).

Positions 11, 12, 33, 36, 68, 70, 73, 90, 91, and 160 each coordinate NAD(+).

Belongs to the Gfo/Idh/MocA family. As to quaternary structure, homodimer. Requires NAD(+) as cofactor.

It catalyses the reaction N-acetyl-2,7-anhydro-alpha-neuraminate + H2O = N-acetyl-alpha-neuraminate. The catalysed reaction is 2-deoxy-2,3-dehydro-N-acetylneuraminate + H2O = N-acetyl-alpha-neuraminate. Its activity is regulated as follows. All conversions require NAD(+) as a cofactor, which is regenerated in the reaction. The presence of EGTA and several divalent cations does not affect the activity. Its function is as follows. Hydratase involved in the degradation of sialic acids. Catalyzes the reversible conversion of the dehydrated form of N-acetylneuraminate (Neu5Ac), 2,7-anhydro-N-acetylneuraminate (2,7-AN), to Neu5Ac. Also catalyzes the irreversible conversion of 2-deoxy-2,3-didehydro-N-acetylneuraminate (2,3-EN) to Neu5Ac. The reaction mechanism involves keto intermediates and the transient formation of NADH. This is 2,7-anhydro-N-acetylneuraminate hydratase from Escherichia coli (strain K12).